Here is a 309-residue protein sequence, read N- to C-terminus: Probable 3-hydroxyacyl-CoA dehydrogenase B0272.3 (309 aa).

This sequence belongs to the 3-hydroxyacyl-CoA dehydrogenase family. As to quaternary structure, homodimer.

It localises to the mitochondrion matrix. The enzyme catalyses a (3S)-3-hydroxyacyl-CoA + NAD(+) = a 3-oxoacyl-CoA + NADH + H(+). The protein operates within lipid metabolism; fatty acid beta-oxidation. In Caenorhabditis elegans, this protein is Probable 3-hydroxyacyl-CoA dehydrogenase B0272.3.